Reading from the N-terminus, the 258-residue chain is uncharacterized protein (258 aa).

The Cyclin N-terminal domain maps to 16–148 (EAFDSFEYAE…VLRALNFDTH (133 aa)).

The protein belongs to the cyclin family. Cyclin L subfamily.

Its subcellular location is the cytoplasm. It localises to the nucleus. This is an uncharacterized protein from Schizosaccharomyces pombe (strain 972 / ATCC 24843) (Fission yeast).